The chain runs to 339 residues: MNWTRGKTLGRGSTATVSAATCHESGETLAVKSAEFHRSEFLQREAKILSSLNSPYVIGYRGCEITREPFHNNGEATTYSLLMEYAPYGTLTDVATKNGGFIDEARVVKYTRQILLGLEYIHNSKGIAHCDIKGSNVLVGENGEAKIADFGCAKWVEPEITEPVRGTPAFMAPEAARGERQGKESDIWAVGCTVIEMVTGSQPWIGADFTDPVSVLYRVGYLGELPELPCSLTEQAKDFLGKCLKKEATERWTASQLLNHPFLVNKEPELVTGLVTNSPTSVTDQMFWRSVEEEVSEDRSSWWECHEDERIGVLSWIGHVVVESTWDLDGEDWITVRRN.

Residues Trp3 to Leu263 form the Protein kinase domain. ATP is bound by residues Leu9 to Val17 and Lys32. Catalysis depends on Asp131, which acts as the Proton acceptor. Ser301 is subject to Phosphoserine.

This sequence belongs to the protein kinase superfamily. Ser/Thr protein kinase family. In terms of assembly, interacts with ABI1. Binds to MKK3. Associates with SRK2E within the nucleus. In terms of processing, autophosphorylated. Post-translationally, unstable protein degraded by the proteasome pathway; this degradation is promoted by ABI1, but blocked by ABA. Expressed in roots, leaves and flowers.

It is found in the nucleus. The catalysed reaction is L-seryl-[protein] + ATP = O-phospho-L-seryl-[protein] + ADP + H(+). It carries out the reaction L-threonyl-[protein] + ATP = O-phospho-L-threonyl-[protein] + ADP + H(+). With respect to regulation, kinase activity is activated by abscisic acid (ABA). Inhibited by ABI1. Activated by SRK2E. Component of the abscisic acid (ABA) signaling pathway that acts as ABA signal transducer in the context of abiotic stresses. Triggers MPK1, MPK2, MPK7 and MPK14 activation in a MKK3-dependent manner and MPK6 activation in a MKK3-independent manner. Mediates the ABA-dependent activation of the MKK3-MPK7 module. Positive regulator of ABA responses leading to the induction of gene expression (e.g. RD29B and RAB18) and involved in various responses including stomatal development, stomatal movement, inhibition of germination and root growth. Promotes leaf senescence. The polypeptide is Mitogen-activated protein kinase kinase kinase 18 (Arabidopsis thaliana (Mouse-ear cress)).